The primary structure comprises 220 residues: Octanoyltransferase (220 aa).

The 187-residue stretch at E31–A217 folds into the BPL/LPL catalytic domain. Substrate contacts are provided by residues R70–H77, S146–G148, and G159–A161. Catalysis depends on C177, which acts as the Acyl-thioester intermediate.

This sequence belongs to the LipB family.

Its subcellular location is the cytoplasm. The catalysed reaction is octanoyl-[ACP] + L-lysyl-[protein] = N(6)-octanoyl-L-lysyl-[protein] + holo-[ACP] + H(+). Its pathway is protein modification; protein lipoylation via endogenous pathway; protein N(6)-(lipoyl)lysine from octanoyl-[acyl-carrier-protein]: step 1/2. In terms of biological role, catalyzes the transfer of endogenously produced octanoic acid from octanoyl-acyl-carrier-protein onto the lipoyl domains of lipoate-dependent enzymes. Lipoyl-ACP can also act as a substrate although octanoyl-ACP is likely to be the physiological substrate. This is Octanoyltransferase from Actinobacillus succinogenes (strain ATCC 55618 / DSM 22257 / CCUG 43843 / 130Z).